Reading from the N-terminus, the 324-residue chain is Pepsin-2B (324 aa).

One can recognise a Peptidase A1 domain in the interval 14–321 (YYGVISIGTP…DRTNNKVGFA (308 aa)). Asp-32 is an active-site residue. Cys-45 and Cys-50 form a disulfide bridge. Positions 86-109 (QDTVSVGGGSDPNQELGESQTEPG) are disordered. The span at 96 to 107 (DPNQELGESQTE) shows a compositional bias: polar residues. A disulfide bridge links Cys-206 with Cys-209. Residue Asp-214 is part of the active site. The cysteines at positions 247 and 280 are disulfide-linked.

This sequence belongs to the peptidase A1 family.

This is Pepsin-2B from Gadus morhua (Atlantic cod).